The following is a 629-amino-acid chain: tRNA uridine 5-carboxymethylaminomethyl modification enzyme MnmG (629 aa).

13–18 (GGGHAG) is an FAD binding site. 273-287 (GPRYCPSIEDKIHRF) lines the NAD(+) pocket.

The protein belongs to the MnmG family. As to quaternary structure, homodimer. Heterotetramer of two MnmE and two MnmG subunits. Requires FAD as cofactor.

The protein localises to the cytoplasm. Functionally, NAD-binding protein involved in the addition of a carboxymethylaminomethyl (cmnm) group at the wobble position (U34) of certain tRNAs, forming tRNA-cmnm(5)s(2)U34. The polypeptide is tRNA uridine 5-carboxymethylaminomethyl modification enzyme MnmG (Shewanella baltica (strain OS185)).